We begin with the raw amino-acid sequence, 74 residues long: Antimicrobial peptide HsAp4 (74 aa).

The first 21 residues, 1–21, serve as a signal peptide directing secretion; sequence MSRRRILILVLVTMLVKTMAG. The propeptide occupies 22-33; the sequence is MESKWVETTYEI. Arg-65 bears the Arginine amide mark. Residues 69 to 74 constitute a propeptide that is removed on maturation; it reads AISEQT.

This sequence belongs to the non-disulfide-bridged peptide (NDBP) superfamily. Medium-length antimicrobial peptide (group 3) family. Expressed by the venom gland.

The protein localises to the secreted. It localises to the target cell membrane. Possesses antimicrobial activity against both Gram-negative and Gram-positive bacteria, as well as against the fungus C.tropicalis. Also possesses a relatively high hemolytic activity. May act by disrupting the integrity of the bacterial cell membrane. The protein is Antimicrobial peptide HsAp4 of Heterometrus spinifer (Asia giant forest scorpion).